The primary structure comprises 624 residues: Vitamin B12 transporter BtuB (624 aa).

The N-terminal stretch at 1–21 (MTIKKYTLLTALSVTAFSGWA) is a signal peptide. A TonB box motif is present at residues 31–38 (NEMVVTAN). In terms of domain architecture, TBDR plug spans 43–157 (PKSSVLAPVD…IGGVVNIITE (115 aa)). Residues Leu88, Ser90, Asn97, and 115 to 116 (IS) each bind cyanocob(III)alamin. In terms of domain architecture, TBDR beta-barrel spans 160–624 (TLGSTLTAGL…EYYFTGSYNF (465 aa)). Transmembrane regions (beta stranded) follow at residues 163-170 (STLTAGLG), 174-183 (YQNYNGSTQQ), and 189-200 (TTITLAGNYDYS). Residues Asp204, Gln216, Asp218, and Asp220 each contribute to the Ca(2+) site. A run of 2 beta stranded transmembrane segments spans residues 222 to 232 (YLGKMLWLGAN) and 237 to 253 (EQFS…NRSD). Tyr254, Asp255, and Asp266 together coordinate Ca(2+). The next 17 beta stranded transmembrane spans lie at 268-282 (RSLS…INFS), 284-301 (GGYA…QDYN), 314-330 (TLDD…NTYQ), 333-342 (LGNVGGGLDW), 358-374 (YEQR…QFVG), 376-386 (VTLEGAIRGDD), 390-405 (FGWH…WEFV), 408-422 (YRLI…KAPN), 440-449 (ESTQWEAAIT), 455-464 (LDWRLSAYRN), 481-498 (YYNV…TGSF), 502-517 (PLSH…PRNA), 525-537 (RRAK…QLDW), 543-557 (DWSV…RYDS), 568-582 (PVKL…LAVS), 595-606 (IANLFDKDYEMV), and 612-624 (PGRE…SYNF). Residue Thr314 coordinates cyanocob(III)alamin. Arg525 is a binding site for cyanocob(III)alamin. The TonB C-terminal box motif lies at 607-624 (YGYQTPGREYYFTGSYNF).

It belongs to the TonB-dependent receptor family. BtuB (TC 1.B.14.3.1) subfamily.

The protein resides in the cell outer membrane. Functionally, involved in the active translocation of vitamin B12 (cyanocobalamin) across the outer membrane to the periplasmic space. It derives its energy for transport by interacting with the trans-periplasmic membrane protein TonB. The protein is Vitamin B12 transporter BtuB of Yersinia pseudotuberculosis serotype O:1b (strain IP 31758).